Here is a 762-residue protein sequence, read N- to C-terminus: Endonuclease MutS2 (762 aa).

333 to 340 is an ATP binding site; it reads GVNAGGKT. Residues 688 to 762 enclose the Smr domain; it reads LDLRGQRSEE…GGSGVKIVKL (75 aa).

This sequence belongs to the DNA mismatch repair MutS family. MutS2 subfamily. As to quaternary structure, homodimer. Binds to stalled ribosomes, contacting rRNA.

Functionally, endonuclease that is involved in the suppression of homologous recombination and thus may have a key role in the control of bacterial genetic diversity. Its function is as follows. Acts as a ribosome collision sensor, splitting the ribosome into its 2 subunits. Detects stalled/collided 70S ribosomes which it binds and splits by an ATP-hydrolysis driven conformational change. Acts upstream of the ribosome quality control system (RQC), a ribosome-associated complex that mediates the extraction of incompletely synthesized nascent chains from stalled ribosomes and their subsequent degradation. Probably generates substrates for RQC. The protein is Endonuclease MutS2 of Helicobacter pylori (strain J99 / ATCC 700824) (Campylobacter pylori J99).